The chain runs to 229 residues: Putative germin-like protein 12-4 (229 aa).

The N-terminal stretch at 1-22 (MAASNFFLLTAFIALVATQAMA) is a signal peptide. The cysteines at positions 32 and 47 are disulfide-linked. Residues 62–217 (ANLDKPMDTT…AFQVDKKAMD (156 aa)) form the Cupin type-1 domain. A glycan (N-linked (GlcNAc...) asparagine) is linked at Asn78. His111, His113, Glu118, and His162 together coordinate Mn(2+).

Belongs to the germin family. In terms of assembly, oligomer (believed to be a pentamer but probably hexamer).

Its subcellular location is the secreted. It localises to the extracellular space. The protein localises to the apoplast. May play a role in plant defense. Probably has no oxalate oxidase activity even if the active site is conserved. This Oryza sativa subsp. japonica (Rice) protein is Putative germin-like protein 12-4.